The primary structure comprises 162 residues: Mitochondrial fission process protein 1 (162 aa).

Helical transmembrane passes span 36-56 (SLVK…YVAA), 81-101 (AIIA…IPGF), and 128-148 (TVTA…DAFV).

It belongs to the MTFP1 family.

It is found in the mitochondrion inner membrane. Involved in the mitochondrial division probably by regulating membrane fission. Loss-of-function leads to apoptosis. This is Mitochondrial fission process protein 1 from Caenorhabditis briggsae.